Reading from the N-terminus, the 192-residue chain is MNAIWIAVAAVSLLGLAFGAILGYASRRFAVEDDPVVEKIDEILPQSQCGQCGYPGCRPYAEAISCNGEKINRCAPGGEAVMLKIAELLNVEPQPLDGEAQELTPARMVAVIDENNCIGCTKCIQACPVDAIVGATRVMHTVMSDLCTGCNLCVDPCPTHCISLQPVAETPDSWKWDLNTIPVRIIPVEHHA.

A hydrophobic region spans residues 1–26; the sequence is MNAIWIAVAAVSLLGLAFGAILGYAS. Positions 32–91 constitute a 4Fe-4S domain; sequence EDDPVVEKIDEILPQSQCGQCGYPGCRPYAEAISCNGEKINRCAPGGEAVMLKIAELLNV. [4Fe-4S] cluster-binding residues include Cys49, Cys52, Cys57, Cys74, Cys117, Cys120, Cys123, Cys127, Cys147, Cys150, Cys153, and Cys157. 4Fe-4S ferredoxin-type domains lie at 108 to 137 and 138 to 167; these read MVAV…GATR and VMHT…LQPV.

The protein belongs to the 4Fe4S bacterial-type ferredoxin family. RnfB subfamily. The complex is composed of six subunits: RsxA, RsxB, RsxC, RsxD, RsxE and RsxG. The cofactor is [4Fe-4S] cluster.

It is found in the cell inner membrane. Functionally, part of a membrane-bound complex that couples electron transfer with translocation of ions across the membrane. Required to maintain the reduced state of SoxR. The chain is Ion-translocating oxidoreductase complex subunit B from Shigella boydii serotype 4 (strain Sb227).